The following is an 847-amino-acid chain: Rho GTPase-activating protein 12 (847 aa).

Positions 12 to 74 (PGQAYIEVEY…PAQYVKEVTR (63 aa)) constitute an SH3 domain. Residues 110–241 (LPELSSFGKP…PPNQGRPDSP (132 aa)) are disordered. 2 stretches are compositionally biased toward polar residues: residues 117–174 (GKPS…QNRT) and 191–200 (TSFSQEQSCD). Ser165 bears the Phosphoserine mark. Ser201, Ser213, and Ser215 each carry phosphoserine. A compositionally biased stretch (polar residues) spans 224–234 (TEQIRATTPPN). 2 positions are modified to phosphothreonine: Thr230 and Thr231. The residue at position 240 (Ser240) is a Phosphoserine. At Tyr243 the chain carries Phosphotyrosine. 2 consecutive WW domains span residues 265–298 (IQIN…PPRW) and 358–391 (DYTN…LPKY). The segment at 293 to 317 (WKPPRWTRDASISKGDFQSPGDQEL) is disordered. Disordered stretches follow at residues 428-466 (DTND…DQEK) and 591-625 (PDSP…SEQK). A compositionally biased stretch (polar residues) spans 445-461 (NESSPSSPKHQDTASSP). The 113-residue stretch at 463 to 575 (DQEKYGLLNV…WFKVLSSTIN (113 aa)) folds into the PH domain. Position 593 is a phosphoserine (Ser593). Residues 595-610 (GIEKHDKEKEQKDPKK) show a composition bias toward basic and acidic residues. A Rho-GAP domain is found at 657–845 (SNLANLCQRE…LILLELSSIF (189 aa)).

Its function is as follows. GTPase activator for the Rho-type GTPases by converting them to an inactive GDP-bound state. This is Rho GTPase-activating protein 12 (ARHGAP12) from Macaca fascicularis (Crab-eating macaque).